Here is a 499-residue protein sequence, read N- to C-terminus: Endoglucanase 3 (499 aa).

Residues 1-19 (MALLRCLFLLAVLLPHRNA) form the signal peptide. The active-site Nucleophile is the Asp88. Catalysis depends on residues His416, Asp467, and Glu476.

Belongs to the glycosyl hydrolase 9 (cellulase E) family. As to expression, expressed in flowers.

It is found in the secreted. It carries out the reaction Endohydrolysis of (1-&gt;4)-beta-D-glucosidic linkages in cellulose, lichenin and cereal beta-D-glucans.. The polypeptide is Endoglucanase 3 (GLU8) (Oryza sativa subsp. japonica (Rice)).